We begin with the raw amino-acid sequence, 182 residues long: Methyl-coenzyme M reductase operon protein C (182 aa).

In terms of assembly, MCR is composed of three subunits: alpha, beta, and gamma. The function of proteins C and D is not known.

The polypeptide is Methyl-coenzyme M reductase operon protein C (mcrC) (Methanococcus voltae).